A 385-amino-acid polypeptide reads, in one-letter code: Serpin-Z10 (385 aa).

The segment at 333-357 (GTEAAAVSVGVVSCTSFRRNPDFVA) is RCL.

This sequence belongs to the serpin family.

Functionally, probable serine protease inhibitor. This chain is Serpin-Z10, found in Arabidopsis thaliana (Mouse-ear cress).